Reading from the N-terminus, the 68-residue chain is Large ribosomal subunit protein uL29 (68 aa).

Belongs to the universal ribosomal protein uL29 family.

This chain is Large ribosomal subunit protein uL29, found in Roseobacter denitrificans (strain ATCC 33942 / OCh 114) (Erythrobacter sp. (strain OCh 114)).